Reading from the N-terminus, the 161-residue chain is DNA-directed RNA polymerase III subunit RPC9 (161 aa).

The tract at residues 75-96 (QEDEGEERESSGAKDAEKSGIS) is disordered. Residues 82–96 (RESSGAKDAEKSGIS) are compositionally biased toward basic and acidic residues.

The protein belongs to the eukaryotic RPC9 RNA polymerase subunit family. In terms of assembly, component of the RNA polymerase III (Pol III) complex consisting of 17 subunits. Forms a Pol III subcomplex with RPC25/RPC8. Interacts with BURF1/TDS4.

The protein localises to the nucleus. Its function is as follows. DNA-dependent RNA polymerase catalyzes the transcription of DNA into RNA using the four ribonucleoside triphosphates as substrates. Specific peripheric component of RNA polymerase III which synthesizes small RNAs, such as 5S rRNA and tRNAs. The RPC25/RPC8-RPC17/RPC9 subcomplex may bind Pol III transcripts emerging from the adjacent exit pore during elongation. In Saccharomyces cerevisiae (strain ATCC 204508 / S288c) (Baker's yeast), this protein is DNA-directed RNA polymerase III subunit RPC9 (RPC17).